Consider the following 161-residue polypeptide: Cyclic pyranopterin monophosphate synthase (161 aa).

Substrate is bound by residues 75–77 (MCH) and 115–116 (ME). The active site involves aspartate 130.

Belongs to the MoaC family. As to quaternary structure, homohexamer; trimer of dimers.

It catalyses the reaction (8S)-3',8-cyclo-7,8-dihydroguanosine 5'-triphosphate = cyclic pyranopterin phosphate + diphosphate. Its pathway is cofactor biosynthesis; molybdopterin biosynthesis. Functionally, catalyzes the conversion of (8S)-3',8-cyclo-7,8-dihydroguanosine 5'-triphosphate to cyclic pyranopterin monophosphate (cPMP). The polypeptide is Cyclic pyranopterin monophosphate synthase (Bacillus cereus (strain G9842)).